The primary structure comprises 1088 residues: DNA-directed RNA polymerase subunit beta (1088 aa).

It belongs to the RNA polymerase beta chain family. In plastids the minimal PEP RNA polymerase catalytic core is composed of four subunits: alpha, beta, beta', and beta''. When a (nuclear-encoded) sigma factor is associated with the core the holoenzyme is formed, which can initiate transcription.

The protein resides in the plastid. It is found in the chloroplast. The enzyme catalyses RNA(n) + a ribonucleoside 5'-triphosphate = RNA(n+1) + diphosphate. DNA-dependent RNA polymerase catalyzes the transcription of DNA into RNA using the four ribonucleoside triphosphates as substrates. This is DNA-directed RNA polymerase subunit beta from Ostreococcus tauri.